The sequence spans 796 residues: Probable phosphoketolase 2 (796 aa).

This sequence belongs to the XFP family. The cofactor is thiamine diphosphate.

The sequence is that of Probable phosphoketolase 2 from Lactiplantibacillus plantarum (strain ATCC BAA-793 / NCIMB 8826 / WCFS1) (Lactobacillus plantarum).